The sequence spans 469 residues: GTPase Der (469 aa).

EngA-type G domains follow at residues 3–167 (PTLV…PEEE) and 176–349 (PKIA…AAAF). GTP-binding positions include 9 to 16 (GRPNVGKS), 56 to 60 (DTGGL), 119 to 122 (NKAE), 182 to 189 (GRPNVGKS), 229 to 233 (DTAGV), and 294 to 297 (NKWD). The 87-residue stretch at 350–436 (IKLSTPKLTR…RIQIKEDEGK (87 aa)) folds into the KH-like domain. Residues 432–443 (EDEGKNPFEGKK) show a composition bias toward basic and acidic residues. The tract at residues 432 to 469 (EDEGKNPFEGKKRAPLSESEATRMRRKKRVRRKVYGAD) is disordered. A compositionally biased stretch (basic residues) spans 455-469 (MRRKKRVRRKVYGAD).

It belongs to the TRAFAC class TrmE-Era-EngA-EngB-Septin-like GTPase superfamily. EngA (Der) GTPase family. As to quaternary structure, associates with the 50S ribosomal subunit.

GTPase that plays an essential role in the late steps of ribosome biogenesis. This Thiobacillus denitrificans (strain ATCC 25259 / T1) protein is GTPase Der.